The following is a 341-amino-acid chain: 4-hydroxy-2-oxovalerate aldolase 2 (341 aa).

The region spanning 8 to 260 (VTVHDMTLRD…ETGVDVAKIT (253 aa)) is the Pyruvate carboxyltransferase domain. A substrate-binding site is contributed by 16 to 17 (RD). D17 lines the Mn(2+) pocket. H20 (proton acceptor) is an active-site residue. Substrate is bound by residues S170 and H199. H199 and H201 together coordinate Mn(2+). Y290 is a binding site for substrate.

The protein belongs to the 4-hydroxy-2-oxovalerate aldolase family.

The catalysed reaction is (S)-4-hydroxy-2-oxopentanoate = acetaldehyde + pyruvate. The protein is 4-hydroxy-2-oxovalerate aldolase 2 of Dechloromonas aromatica (strain RCB).